Consider the following 79-residue polypeptide: Translational regulator CsrA (79 aa).

It belongs to the CsrA/RsmA family. As to quaternary structure, homodimer; the beta-strands of each monomer intercalate to form a hydrophobic core, while the alpha-helices form wings that extend away from the core.

The protein resides in the cytoplasm. A translational regulator that binds mRNA to regulate translation initiation and/or mRNA stability. Usually binds in the 5'-UTR at or near the Shine-Dalgarno sequence preventing ribosome-binding, thus repressing translation. Its main target seems to be the major flagellin gene, while its function is anatagonized by FliW. In Syntrophus aciditrophicus (strain SB), this protein is Translational regulator CsrA.